The primary structure comprises 681 residues: Transmembrane protein 214-A (681 aa).

Disordered regions lie at residues 1–41 and 58–99; these read MASG…GTAP and KKQN…GSRQ. N-linked (GlcNAc...) asparagine glycans are attached at residues Asn-300 and Asn-324. Transmembrane regions (helical) follow at residues 471-491 and 608-628; these read GFPW…FVFY and LLLH…EAAV.

It belongs to the TMEM214 family. As to quaternary structure, constitutively interacts with CASP4; required for the localization of procaspase 4 to the ER.

It localises to the endoplasmic reticulum membrane. Critical mediator, in cooperation with CASP4, of endoplasmic reticulum-stress induced apoptosis. Required or the activation of CASP4 following endoplasmic reticulum stress. The protein is Transmembrane protein 214-A (tmem214-a) of Xenopus laevis (African clawed frog).